Reading from the N-terminus, the 544-residue chain is Chaperonin GroEL 2 (544 aa).

ATP contacts are provided by residues Thr-29–Pro-32, Asp-86–Thr-90, Gly-413, Asn-479–Ala-481, and Asp-495.

This sequence belongs to the chaperonin (HSP60) family. As to quaternary structure, forms a cylinder of 14 subunits composed of two heptameric rings stacked back-to-back. Interacts with the co-chaperonin GroES.

It is found in the cytoplasm. The catalysed reaction is ATP + H2O + a folded polypeptide = ADP + phosphate + an unfolded polypeptide.. Together with its co-chaperonin GroES, plays an essential role in assisting protein folding. The GroEL-GroES system forms a nano-cage that allows encapsulation of the non-native substrate proteins and provides a physical environment optimized to promote and accelerate protein folding. This Trichodesmium erythraeum (strain IMS101) protein is Chaperonin GroEL 2.